The chain runs to 46 residues: Short transmembrane mitochondrial protein 1 (46 aa).

A helical membrane pass occupies residues 7 to 23 (GFTLGNVVGMYLAQNYE).

It belongs to the STMP1 family. As to expression, widely expressed. Expressed more abundantly in brain compared with other tissues such as heart, muscle and liver.

Its subcellular location is the mitochondrion inner membrane. It is found in the mitochondrion outer membrane. It localises to the mitochondrion intermembrane space. In terms of biological role, microprotein involved in mitochondrial respiratory chain complex III (ubiquinol-cytochrome c oxidoreductase) and complex IV (mitochondrial cytochrome c oxidase complex) assembly. Required for the formation of mitochondrial supercomplexes (SCs). Also required for the activation of the NLRP3 inflammasome. This is Short transmembrane mitochondrial protein 1 from Danio rerio (Zebrafish).